Consider the following 241-residue polypeptide: Carboxy-S-adenosyl-L-methionine synthase (241 aa).

S-adenosyl-L-methionine contacts are provided by residues tyrosine 38, 63-65 (GCS), 88-89 (DN), 116-117 (DI), asparagine 131, and arginine 198.

This sequence belongs to the class I-like SAM-binding methyltransferase superfamily. Cx-SAM synthase family. In terms of assembly, homodimer.

It carries out the reaction prephenate + S-adenosyl-L-methionine = carboxy-S-adenosyl-L-methionine + 3-phenylpyruvate + H2O. Functionally, catalyzes the conversion of S-adenosyl-L-methionine (SAM) to carboxy-S-adenosyl-L-methionine (Cx-SAM). The polypeptide is Carboxy-S-adenosyl-L-methionine synthase (Mannheimia succiniciproducens (strain KCTC 0769BP / MBEL55E)).